The sequence spans 250 residues: MSKEKQAQSKAHKAQQAISSAKSLSTQKSKMSELERATRDGAAIGKKRADIAKKIADKAKQLSSYQAKQFKADEQAVKKVAQEQKRLSDERTKHEAFIKQSLSSMRTTASATMEAEEEYDFFISHASEDKEAFVQDLVAALRDLGAKIFYDAYTLKVGDSLRRKIDQGLANSKFGIVVLSEHFFSKQWPARELDGLTAMEIGGQTRILPIWHKVSYDEVRRFSPSLADKVALNTSLKSVEEIAKELHSLI.

A disordered region spans residues 1-46; it reads MSKEKQAQSKAHKAQQAISSAKSLSTQKSKMSELERATRDGAAIGK. Positions 1–117 are necessary and sufficient for phosphoinositide binding; it reads MSKEKQAQSK…TASATMEAEE (117 aa). Residues 14-23 show a composition bias toward low complexity; that stretch reads AQQAISSAKS. Residues 30-39 are compositionally biased toward basic and acidic residues; it reads KMSELERATR. In terms of domain architecture, TIR spans 117–250; sequence EEYDFFISHA…EIAKELHSLI (134 aa). Residue Glu192 is part of the active site.

In terms of assembly, homodimer; may also form oligomers. Interacts with host TIRAP. Interacts with host MYD88. Interaction with host MYD88 was not confirmed by another study. Interacts with host TLR4. Abolishes the interaction of host TIRAP with TLR4.

Its subcellular location is the secreted. It localises to the host cell membrane. The enzyme catalyses NAD(+) + H2O = ADP-D-ribose + nicotinamide + H(+). It catalyses the reaction NAD(+) = 2'cADPR + nicotinamide + H(+). Virulence factor that interferes with host Toll-like receptor 2 (TLR2) and TLR4 signaling, resulting in the reduction of dendritic cell maturation, inhibition of pro-inflammatory cytokine secretion and impaired NF-kappa-B activation in macrophages. Interferes with host TLR4 signaling by abolishing host TLR4-TIRAP interaction (but not host TIRAP-MYD88 interaction) and its downstream signaling. Inhibits host TLR 2 induced NF-kappa-B activation and TNF (tumor necrosis factor) secretion. Binds phosphoinositide (PtdIns) via its N-terminal domain. Has NAD(+) hydrolase (NADase) activity, catalyzes cleavage of NAD(+) into ADP-D-ribose (ADPR) and nicotinamide. Also generates a cyclization variant of cyclic ADPR (cADPR), termed v-cADPR (probably 2'cADPR). The polypeptide is Probable 2' cyclic ADP-D-ribose synthase TcpB (Brucella melitensis biotype 1 (strain ATCC 23456 / CCUG 17765 / NCTC 10094 / 16M)).